A 457-amino-acid chain; its full sequence is Nuclear hormone receptor family member nhr-20 (457 aa).

Residues 16–92 (TSKCLVCEHP…AGMRRECVQK (77 aa)) constitute a DNA-binding region (nuclear receptor). NR C4-type zinc fingers lie at residues 19–40 (CLVCEHPDGGSAHFGSTSCLAC) and 56–80 (CKKDKNCVIFHELRMICRACRFDKC). The tract at residues 125 to 182 (GDQTDDNSPLSIEKKSPPGLLPNDSPMMADFKFDPSDIPSTSGGSTQRLERSPSPKLA) is disordered. The span at 162-171 (IPSTSGGSTQ) shows a compositional bias: polar residues. Positions 201-457 (QLKNSMDRRR…DALSKSLLTL (257 aa)) constitute an NR LBD domain.

The protein belongs to the nuclear hormone receptor family.

It is found in the nucleus. In terms of biological role, orphan nuclear receptor. The sequence is that of Nuclear hormone receptor family member nhr-20 (nhr-20) from Caenorhabditis elegans.